The following is a 199-amino-acid chain: Phosphoheptose isomerase (199 aa).

Residues 36–198 (MAQCLLNEHK…DRKLIPSSED (163 aa)) form the SIS domain. Residue 51-53 (NGG) participates in substrate binding. Zn(2+) is bound by residues His60 and Glu64. Substrate-binding positions include Glu64, 93–94 (ND), 119–121 (STS), Ser124, and Gln174. Gln174 and His182 together coordinate Zn(2+).

This sequence belongs to the SIS family. GmhA subfamily. As to quaternary structure, homotetramer. It depends on Zn(2+) as a cofactor.

Its subcellular location is the cytoplasm. The enzyme catalyses 2 D-sedoheptulose 7-phosphate = D-glycero-alpha-D-manno-heptose 7-phosphate + D-glycero-beta-D-manno-heptose 7-phosphate. It functions in the pathway carbohydrate biosynthesis; D-glycero-D-manno-heptose 7-phosphate biosynthesis; D-glycero-alpha-D-manno-heptose 7-phosphate and D-glycero-beta-D-manno-heptose 7-phosphate from sedoheptulose 7-phosphate: step 1/1. Functionally, catalyzes the isomerization of sedoheptulose 7-phosphate in D-glycero-D-manno-heptose 7-phosphate. In Coxiella burnetii (strain CbuK_Q154) (Coxiella burnetii (strain Q154)), this protein is Phosphoheptose isomerase.